Here is a 93-residue protein sequence, read N- to C-terminus: Small ribosomal subunit protein uS15 (93 aa).

The protein belongs to the universal ribosomal protein uS15 family. In terms of assembly, part of the 30S ribosomal subunit. Forms a bridge to the 50S subunit in the 70S ribosome, contacting the 23S rRNA.

Functionally, one of the primary rRNA binding proteins, it binds directly to 16S rRNA where it helps nucleate assembly of the platform of the 30S subunit by binding and bridging several RNA helices of the 16S rRNA. Its function is as follows. Forms an intersubunit bridge (bridge B4) with the 23S rRNA of the 50S subunit in the ribosome. The protein is Small ribosomal subunit protein uS15 of Anaplasma marginale (strain Florida).